Reading from the N-terminus, the 760-residue chain is Semaphorin-4A (760 aa).

An N-terminal signal peptide occupies residues 1-32; it reads MALPSLGQDSWSLLRVFFFQLFLLPSLPPASG. Over 33–682 the chain is Extracellular; sequence TGGQGPMPRV…MAAQRSYWPH (650 aa). Residues 36 to 494 form the Sema domain; the sequence is QGPMPRVKYH…FSGGIWRVPR (459 aa). Cys113 and Cys124 are oxidised to a cystine. 2 N-linked (GlcNAc...) asparagine glycosylation sites follow: Asn120 and Asn135. Disulfide bonds link Cys142/Cys151, Cys269/Cys379, and Cys293/Cys339. Asn496 is a glycosylation site (N-linked (GlcNAc...) asparagine). The PSI domain occupies 496–547; the sequence is NCSVYESCVDCVLARDPHCAWDPESRLCSLLSGSTKPWKQDMERGNPEWVCT. Intrachain disulfides connect Cys497/Cys514, Cys506/Cys523, and Cys579/Cys623. The 59-residue stretch at 572-630 folds into the Ig-like C2-type domain; that stretch reads NSILELPCPHLSALASYHWSHGRAKISEASATVYNGSLLLLPQDGVGGLYQCVATENGY. Residue Asn606 is glycosylated (N-linked (GlcNAc...) asparagine). A helical membrane pass occupies residues 683–703; sequence FLIVTVLLAIVLLGVLTLLLA. The Cytoplasmic portion of the chain corresponds to 704–760; that stretch reads SPLGALRARGKVQGCGMLPPREKAPLSRDQHLQPSKDHRTSASDVDADNNHLGAEVA. The segment at 720–760 is disordered; it reads MLPPREKAPLSRDQHLQPSKDHRTSASDVDADNNHLGAEVA. Positions 723-744 are enriched in basic and acidic residues; that stretch reads PREKAPLSRDQHLQPSKDHRTS.

This sequence belongs to the semaphorin family. In terms of assembly, interacts with PLXNB1, PLXNB2 and PLXNB3. Interacts with PLXND1. Interacts with TIMD2. Expressed in neurons and glia in the developing hippocampus.

It is found in the cell membrane. Cell surface receptor for PLXNB1, PLXNB2, PLXNB3 and PLXND1 that plays an important role in cell-cell signaling. Regulates glutamatergic and GABAergic synapse development. Promotes the development of inhibitory synapses in a PLXNB1-dependent manner and promotes the development of excitatory synapses in a PLXNB2-dependent manner. Plays a role in priming antigen-specific T-cells, promotes differentiation of Th1 T-helper cells, and thereby contributes to adaptive immunity. Promotes phosphorylation of TIMD2. Inhibits angiogenesis. Promotes axon growth cone collapse. Inhibits axonal extension by providing local signals to specify territories inaccessible for growing axons. This Mus musculus (Mouse) protein is Semaphorin-4A (Sema4a).